We begin with the raw amino-acid sequence, 975 residues long: Synaptopodin 2-like protein (975 aa).

The 80-residue stretch at 6-85 (EVQVTLAGGA…QLVLTVRRVT (80 aa)) folds into the PDZ domain. Disordered stretches follow at residues 18–41 (GFRL…QAGR), 86–214 (DEGS…PAEA), and 314–349 (AGTG…QSDW). Phosphoserine is present on residues Ser105 and Ser108. Thr138 is subject to Phosphothreonine. Ser140, Ser163, Ser175, and Ser177 each carry phosphoserine. Residues 187-200 (GSPSQGDSRVSSPS) are compositionally biased toward polar residues. The span at 202 to 214 (EEGAALQPPPAEA) shows a compositional bias: low complexity. Polar residues predominate over residues 339–349 (DARSLTNQSDW). Phosphoserine is present on residues Ser342, Ser347, Ser371, Ser378, and Ser381. 4 positions are modified to omega-N-methylarginine: Arg383, Arg463, Arg466, and Arg476. The tract at residues 491–649 (KVNEGLGSTS…ETKNSPNPEL (159 aa)) is disordered. The segment covering 502 to 516 (APSPFAAPPQGPTPL) has biased composition (pro residues). The segment covering 519–528 (FTTVVPSHTP) has biased composition (polar residues). Composition is skewed to low complexity over residues 530–540 (SGASSSTQRSS) and 571–580 (SAAAMTSTAS). Residues Ser667 and Ser675 each carry the phosphoserine modification. The tract at residues 687-731 (LGGRSYKTLPQVSPKTPPPMAPKTPPPTTPKTPPPVAPKPGSRGL) is disordered. Residues 701–724 (KTPPPMAPKTPPPTTPKTPPPVAP) are compositionally biased toward pro residues. Residues Thr702 and Thr710 each carry the phosphothreonine modification. Position 754 is an omega-N-methylarginine (Arg754). A disordered region spans residues 772–797 (EATSGSSLNPGLRPRSPSPTPSLPPS). Ser787 and Ser789 each carry phosphoserine. Thr791 carries the phosphothreonine modification. Residues Arg805, Arg825, and Arg888 each carry the omega-N-methylarginine modification. Ser890 bears the Phosphoserine mark. Phosphothreonine occurs at positions 891 and 897. Arg909 bears the Omega-N-methylarginine mark. Arg920 is modified (asymmetric dimethylarginine; alternate). An Omega-N-methylarginine; alternate modification is found at Arg920. An omega-N-methylarginine mark is found at Arg953 and Arg955.

This sequence belongs to the synaptopodin family.

It is found in the cytoplasm. The protein resides in the cytoskeleton. Its function is as follows. Actin-associated protein that may play a role in modulating actin-based shape. This is Synaptopodin 2-like protein (Synpo2l) from Mus musculus (Mouse).